Consider the following 202-residue polypeptide: MATVLRIDSSALSNGSHSKALADFFQTQWLEKHPTDSFQTLDLSQTPPPHLSEATIGAMFTPTEERSKEQTQQLALSTDYIEQLKKADVILISTPMYNFGIPSTLKAYLDHSLRVGETFVYTDKGPKGLLEGKKAIVVAASGGDYTQSPLDAMNFVTPYLKTALGFIGIEDVTLVEAPGMAGDEASINKSIKQAKQTLQNCL.

FMN is bound by residues Ser-10, 16–18, and 96–99; these read SHS and MYNF.

This sequence belongs to the azoreductase type 1 family. As to quaternary structure, homodimer. It depends on FMN as a cofactor.

It catalyses the reaction 2 a quinone + NADH + H(+) = 2 a 1,4-benzosemiquinone + NAD(+). The enzyme catalyses N,N-dimethyl-1,4-phenylenediamine + anthranilate + 2 NAD(+) = 2-(4-dimethylaminophenyl)diazenylbenzoate + 2 NADH + 2 H(+). Its function is as follows. Quinone reductase that provides resistance to thiol-specific stress caused by electrophilic quinones. Functionally, also exhibits azoreductase activity. Catalyzes the reductive cleavage of the azo bond in aromatic azo compounds to the corresponding amines. The polypeptide is FMN-dependent NADH:quinone oxidoreductase (Hydrogenovibrio crunogenus (strain DSM 25203 / XCL-2) (Thiomicrospira crunogena)).